The primary structure comprises 285 residues: Protease HtpX homolog (285 aa).

The next 2 membrane-spanning stretches (helical) occupy residues 7–27 (TAML…MIGG) and 30–50 (GMTI…WFSD). Residue H131 participates in Zn(2+) binding. Residue E132 is part of the active site. Position 135 (H135) interacts with Zn(2+). 2 helical membrane passes run 146–166 (ITAT…FFGG) and 177–197 (IAGI…QMAI). Residue E202 coordinates Zn(2+).

This sequence belongs to the peptidase M48B family. It depends on Zn(2+) as a cofactor.

It localises to the cell inner membrane. The sequence is that of Protease HtpX homolog from Burkholderia cenocepacia (strain HI2424).